The following is a 314-amino-acid chain: tRNA dimethylallyltransferase (314 aa).

Gly-15–Ser-22 lines the ATP pocket. A substrate-binding site is contributed by Thr-17–Ser-22. An interaction with substrate tRNA region spans residues Asp-40–Leu-43.

Belongs to the IPP transferase family. As to quaternary structure, monomer. It depends on Mg(2+) as a cofactor.

It carries out the reaction adenosine(37) in tRNA + dimethylallyl diphosphate = N(6)-dimethylallyladenosine(37) in tRNA + diphosphate. Functionally, catalyzes the transfer of a dimethylallyl group onto the adenine at position 37 in tRNAs that read codons beginning with uridine, leading to the formation of N6-(dimethylallyl)adenosine (i(6)A). This Pelotomaculum thermopropionicum (strain DSM 13744 / JCM 10971 / SI) protein is tRNA dimethylallyltransferase.